The following is a 558-amino-acid chain: Phosphatidylserine lipase ABHD16A (558 aa).

The next 2 membrane-spanning stretches (helical) occupy residues I60–F80 and V93–L113. Residues R114–L558 lie on the Cytoplasmic side of the membrane. In terms of domain architecture, AB hydrolase-1 spans L281 to L407. Residues S355, D430, and H507 each act as charge relay system in the active site.

It belongs to the AB hydrolase superfamily. ABHD16 family.

Its subcellular location is the membrane. The catalysed reaction is 1-heptadecanoyl-2-(5Z,8Z,11Z,14Z-eicosatetraenoyl)-sn-glycero-3-phosphoserine + H2O = 1-heptadecanoyl-sn-glycero-3-phosphoserine + (5Z,8Z,11Z,14Z)-eicosatetraenoate + H(+). The enzyme catalyses 1-hexadecanoyl-2-(9Z-octadecenoyl)-sn-glycero-3-phospho-L-serine + H2O = 1-hexadecanoyl-sn-glycero-3-phospho-L-serine + (9Z)-octadecenoate + H(+). It carries out the reaction 1-octadecanoyl-2-(9Z,12Z-octadecadienoyl)-sn-glycero-3-phosphoserine + H2O = 1-octadecanoyl-sn-glycero-3-phosphoserine + (9Z,12Z)-octadecadienoate + H(+). It catalyses the reaction 1-heptadecanoyl-2-(5Z,8Z,11Z,14Z-eicosatetraenoyl)-sn-glycero-3-phosphocholine + H2O = 1-heptadecanoyl-sn-glycero-3-phosphocholine + (5Z,8Z,11Z,14Z)-eicosatetraenoate + H(+). The catalysed reaction is 1-hexadecanoyl-2-(9Z-octadecenoyl)-sn-glycero-3-phosphoglycerol + H2O = 1-hexadecanoyl-sn-glycero-3-phosphoglycerol + (9Z)-octadecenoate + H(+). The enzyme catalyses 1-hexadecanoyl-2-(9Z-octadecenoyl)-sn-glycero-3-phospho-(1D-myo-inositol) + H2O = 1-hexadecanoyl-sn-glycero-3-phospho-(1D-myo-inositol) + (9Z)-octadecenoate + H(+). It carries out the reaction 1-heptadecanoyl-2-(5Z,8Z,11Z,14Z-eicosatetraenoyl)-sn-glycero-3-phosphoethanolamine + H2O = 1-heptadecanoyl-sn-glycero-3-phosphoethanolamine + (5Z,8Z,11Z,14Z)-eicosatetraenoate + H(+). It catalyses the reaction 1-hexadecanoyl-2-(9Z-octadecenoyl)-sn-glycero-3-phospho-(1'-sn-glycerol) + H2O = 1-hexadecanoyl-sn-glycero-3-phospho-(1'-sn-glycerol) + (9Z)-octadecenoate + H(+). The catalysed reaction is Hydrolyzes glycerol monoesters of long-chain fatty acids.. The enzyme catalyses 1-tetradecanoylglycerol + H2O = tetradecanoate + glycerol + H(+). It carries out the reaction 2-hexadecanoylglycerol + H2O = glycerol + hexadecanoate + H(+). It catalyses the reaction 1-(9Z-octadecenoyl)-glycerol + H2O = glycerol + (9Z)-octadecenoate + H(+). The catalysed reaction is 2-(9Z-octadecenoyl)-glycerol + H2O = glycerol + (9Z)-octadecenoate + H(+). The enzyme catalyses 2-(9Z,12Z-octadecadienoyl)-glycerol + H2O = (9Z,12Z)-octadecadienoate + glycerol + H(+). It carries out the reaction 1-(5Z,8Z,11Z,14Z-eicosatetraenoyl)-glycerol + H2O = glycerol + (5Z,8Z,11Z,14Z)-eicosatetraenoate + H(+). It catalyses the reaction 2-(5Z,8Z,11Z,14Z-eicosatetraenoyl)-glycerol + H2O = glycerol + (5Z,8Z,11Z,14Z)-eicosatetraenoate + H(+). The catalysed reaction is prostaglandin D2-1-glycerol ester + H2O = prostaglandin D2 + glycerol + H(+). The enzyme catalyses 2-glyceryl-15-deoxy-Delta(12,14)-prostaglandin J2 + H2O = 15-deoxy-Delta(12,14)-prostaglandin J2 + glycerol + H(+). It carries out the reaction 1-(9Z,12Z-octadecadienoyl)-glycerol + H2O = (9Z,12Z)-octadecadienoate + glycerol + H(+). Inhibited by beta-lactone-based lipid inhibitors, such as beta-lactone palmostatin-B. In terms of biological role, phosphatidylserine (PS) lipase that mediates the hydrolysis of phosphatidylserine to generate lysophosphatidylserine (LPS). LPS constitutes a class of signaling lipids that regulates immunological and neurological processes. Has no activity towards diacylglycerol, triacylglycerol or lysophosphatidylserine lipase. Also has monoacylglycerol lipase activity, with preference for 1-(9Z,12Z-octadecadienoyl)-glycerol (1-LG) and 2-glyceryl-15-deoxy-Delta(12,14)-prostaglandin J2 (15d-PGJ(2)-G). The chain is Phosphatidylserine lipase ABHD16A from Homo sapiens (Human).